The sequence spans 418 residues: Glutamyl-tRNA reductase (418 aa).

Residues 49 to 52 (TCNR), Ser-109, 114 to 116 (EPQ), and Gln-120 each bind substrate. Cys-50 acts as the Nucleophile in catalysis. Residue 189–194 (GAGETI) participates in NADP(+) binding.

Belongs to the glutamyl-tRNA reductase family. As to quaternary structure, homodimer.

It carries out the reaction (S)-4-amino-5-oxopentanoate + tRNA(Glu) + NADP(+) = L-glutamyl-tRNA(Glu) + NADPH + H(+). It participates in porphyrin-containing compound metabolism; protoporphyrin-IX biosynthesis; 5-aminolevulinate from L-glutamyl-tRNA(Glu): step 1/2. Functionally, catalyzes the NADPH-dependent reduction of glutamyl-tRNA(Glu) to glutamate 1-semialdehyde (GSA). The protein is Glutamyl-tRNA reductase of Escherichia coli O45:K1 (strain S88 / ExPEC).